A 373-amino-acid polypeptide reads, in one-letter code: Anhydro-N-acetylmuramic acid kinase (373 aa).

Residue 12 to 19 coordinates ATP; that stretch reads GTSLDGVD.

Belongs to the anhydro-N-acetylmuramic acid kinase family.

It carries out the reaction 1,6-anhydro-N-acetyl-beta-muramate + ATP + H2O = N-acetyl-D-muramate 6-phosphate + ADP + H(+). It participates in amino-sugar metabolism; 1,6-anhydro-N-acetylmuramate degradation. Its pathway is cell wall biogenesis; peptidoglycan recycling. In terms of biological role, catalyzes the specific phosphorylation of 1,6-anhydro-N-acetylmuramic acid (anhMurNAc) with the simultaneous cleavage of the 1,6-anhydro ring, generating MurNAc-6-P. Is required for the utilization of anhMurNAc either imported from the medium or derived from its own cell wall murein, and thus plays a role in cell wall recycling. In Serratia proteamaculans (strain 568), this protein is Anhydro-N-acetylmuramic acid kinase.